The primary structure comprises 415 residues: Probable N-acetyl-gamma-glutamyl-phosphate reductase, chloroplastic (415 aa).

A chloroplast-targeting transit peptide spans 1–74; the sequence is MGSTALGGGA…SGVKSGEEVR (74 aa). Positions 48–68 are disordered; sequence VRASVASSPQKQHSPKTSGVK. Positions 56–67 are enriched in polar residues; the sequence is PQKQHSPKTSGV. C219 is a catalytic residue.

Belongs to the NAGSA dehydrogenase family. Type 1 subfamily. In terms of assembly, homotetramer.

The protein resides in the plastid. It is found in the chloroplast. The catalysed reaction is N-acetyl-L-glutamate 5-semialdehyde + phosphate + NADP(+) = N-acetyl-L-glutamyl 5-phosphate + NADPH + H(+). The protein operates within amino-acid biosynthesis; L-arginine biosynthesis; N(2)-acetyl-L-ornithine from L-glutamate: step 3/4. The polypeptide is Probable N-acetyl-gamma-glutamyl-phosphate reductase, chloroplastic (Oryza sativa subsp. japonica (Rice)).